Reading from the N-terminus, the 527-residue chain is Laccase-5 (527 aa).

The signal sequence occupies residues 1–23; sequence MGKYHSFVNVVALSLSLSGRVFG. Positions 25–150 constitute a Plastocyanin-like 1 domain; it reads IGPVTDLTIS…DGLRGPLVVY (126 aa). 2 N-linked (GlcNAc...) asparagine glycosylation sites follow: Asn-74 and Asn-77. Residues His-87, His-89, His-132, and His-134 each contribute to the Cu cation site. 2 disulfides stabilise this stretch: Cys-108–Cys-516 and Cys-140–Cys-230. 10 N-linked (GlcNAc...) asparagine glycosylation sites follow: Asn-156, Asn-209, Asn-233, Asn-242, Asn-276, Asn-317, Asn-358, Asn-366, Asn-393, and Asn-402. Residues 162–306 form the Plastocyanin-like 2 domain; sequence VDDDTTVITL…GGVNSAILRY (145 aa). Residues 373–498 enclose the Plastocyanin-like 3 domain; sequence TVPVLLQILS…AGFAIVWGED (126 aa). 7 residues coordinate Cu cation: His-425, His-428, His-430, His-480, Cys-481, His-482, and His-486.

It belongs to the multicopper oxidase family. As to quaternary structure, homodimer. The cofactor is Cu cation.

The protein resides in the secreted. The enzyme catalyses 4 hydroquinone + O2 = 4 benzosemiquinone + 2 H2O. In terms of biological role, lignin degradation and detoxification of lignin-derived products. This is Laccase-5 (LCC5) from Trametes villosa (White-rot fungus).